The following is a 217-amino-acid chain: Ribulose-phosphate 3-epimerase (217 aa).

A substrate-binding site is contributed by Ser7. A divalent metal cation is bound by residues His32, Asp34, and His65. Asp34 (proton acceptor) is an active-site residue. Residues His65, 141 to 144 (GFGG), 175 to 177 (DGG), and 197 to 198 (GS) contribute to the substrate site. A divalent metal cation is bound at residue Asp175. Asp175 (proton donor) is an active-site residue.

This sequence belongs to the ribulose-phosphate 3-epimerase family. Requires a divalent metal cation as cofactor.

The catalysed reaction is D-ribulose 5-phosphate = D-xylulose 5-phosphate. Its pathway is carbohydrate degradation. Catalyzes the reversible epimerization of D-ribulose 5-phosphate to D-xylulose 5-phosphate. In Bacillus subtilis (strain 168), this protein is Ribulose-phosphate 3-epimerase.